The primary structure comprises 272 residues: Hydroxyethylthiazole kinase (272 aa).

Met-44 serves as a coordination point for substrate. ATP contacts are provided by Lys-119 and Thr-172. Residue Gly-199 participates in substrate binding.

It belongs to the Thz kinase family. The cofactor is Mg(2+).

It carries out the reaction 5-(2-hydroxyethyl)-4-methylthiazole + ATP = 4-methyl-5-(2-phosphooxyethyl)-thiazole + ADP + H(+). It functions in the pathway cofactor biosynthesis; thiamine diphosphate biosynthesis; 4-methyl-5-(2-phosphoethyl)-thiazole from 5-(2-hydroxyethyl)-4-methylthiazole: step 1/1. In terms of biological role, catalyzes the phosphorylation of the hydroxyl group of 4-methyl-5-beta-hydroxyethylthiazole (THZ). The chain is Hydroxyethylthiazole kinase from Enterococcus faecalis (strain ATCC 700802 / V583).